A 412-amino-acid chain; its full sequence is Light-independent protochlorophyllide reductase subunit N (412 aa).

[4Fe-4S] cluster is bound by residues C17, C42, and C103.

This sequence belongs to the BchN/ChlN family. In terms of assembly, protochlorophyllide reductase is composed of three subunits; ChlL, ChlN and ChlB. Forms a heterotetramer of two ChlB and two ChlN subunits. [4Fe-4S] cluster serves as cofactor.

The enzyme catalyses chlorophyllide a + oxidized 2[4Fe-4S]-[ferredoxin] + 2 ADP + 2 phosphate = protochlorophyllide a + reduced 2[4Fe-4S]-[ferredoxin] + 2 ATP + 2 H2O. Its pathway is porphyrin-containing compound metabolism; chlorophyll biosynthesis (light-independent). In terms of biological role, component of the dark-operative protochlorophyllide reductase (DPOR) that uses Mg-ATP and reduced ferredoxin to reduce ring D of protochlorophyllide (Pchlide) to form chlorophyllide a (Chlide). This reaction is light-independent. The NB-protein (ChlN-ChlB) is the catalytic component of the complex. This Synechococcus sp. (strain CC9902) protein is Light-independent protochlorophyllide reductase subunit N.